The sequence spans 41 residues: Photosystem II reaction center protein Y (41 aa).

Residues 7 to 25 form a helical membrane-spanning segment; sequence IAIVLAPVVIAASWAVFNI.

It belongs to the PsbY family. In terms of assembly, PSII is composed of 1 copy each of membrane proteins PsbA, PsbB, PsbC, PsbD, PsbE, PsbF, PsbH, PsbI, PsbJ, PsbK, PsbL, PsbM, PsbT, PsbX, PsbY, PsbZ, Psb30/Ycf12, peripheral proteins PsbO, CyanoQ (PsbQ), PsbU, PsbV and a large number of cofactors. It forms dimeric complexes.

The protein localises to the cellular thylakoid membrane. Functionally, loosely associated component of the core of photosystem II (PSII), it is not always seen in crystals. PSII is a light-driven water plastoquinone oxidoreductase, using light energy to abstract electrons from H(2)O, generating a proton gradient subsequently used for ATP formation. The protein is Photosystem II reaction center protein Y of Nostoc punctiforme (strain ATCC 29133 / PCC 73102).